Reading from the N-terminus, the 556-residue chain is Potassium-transporting ATPase potassium-binding subunit (556 aa).

Helical transmembrane passes span 6–26, 65–85, 133–153, 176–196, 249–269, 283–303, 378–398, 419–439, 483–503, and 526–546; these read AGLI…VPLG, GVLA…LVQG, GLAV…VALV, LRIL…GGAI, PTAW…FSLP, YAIA…MLWF, GLYG…LMVG, YFLV…ALPG, ALGL…LALA, and FVGM…LPML.

Belongs to the KdpA family. As to quaternary structure, the system is composed of three essential subunits: KdpA, KdpB and KdpC.

The protein resides in the cell membrane. In terms of biological role, part of the high-affinity ATP-driven potassium transport (or Kdp) system, which catalyzes the hydrolysis of ATP coupled with the electrogenic transport of potassium into the cytoplasm. This subunit binds the extracellular potassium ions and delivers the ions to the membrane domain of KdpB through an intramembrane tunnel. The protein is Potassium-transporting ATPase potassium-binding subunit of Mycobacterium avium (strain 104).